A 957-amino-acid polypeptide reads, in one-letter code: Glutamyl aminopeptidase (957 aa).

The Cytoplasmic segment spans residues 1–18; the sequence is MNFAEREGSKRYCIQTKH. The helical; Signal-anchor for type II membrane protein transmembrane segment at 19 to 39 threads the bilayer; sequence VAILCAVVVGVGLIVGLAVGL. Residues 40–957 lie on the Extracellular side of the membrane; sequence TRSCDSSGDG…EWFFNLLESG (918 aa). The disordered stretch occupies residues 44–83; that stretch reads DSSGDGGPGTAPAPSHLPSSTASPSGPPAQDQDICPASED. Residue N98 is glycosylated (N-linked (GlcNAc...) asparagine; atypical). Residues N124 and N197 are each glycosylated (N-linked (GlcNAc...) asparagine). E223 contacts substrate. N-linked (GlcNAc...) asparagine glycosylation is found at N324 and N340. Residue 357-361 coordinates substrate; that stretch reads GAMEN. A Zn(2+)-binding site is contributed by H393. E394 functions as the Proton acceptor in the catalytic mechanism. Residues H397 and E416 each coordinate Zn(2+). N554, N589, N597, N607, N678, N763, N773, N801, and N828 each carry an N-linked (GlcNAc...) asparagine glycan. R887 lines the substrate pocket.

It belongs to the peptidase M1 family. As to quaternary structure, homodimer; disulfide-linked. Zn(2+) serves as cofactor. Expressed in choriocarcinoma cancer cell lines (at protein level). Expressed by epithelial cells of the proximal tubule cells and the glomerulus of the nephron. Also found in a variety of other tissues.

The protein localises to the cell membrane. The catalysed reaction is Release of N-terminal glutamate (and to a lesser extent aspartate) from a peptide.. Substrate specificity is modulated by calcium which enhances the enzymatic activity for cleavage of acidic residues while reducing its activity with basic residues. Inhibited by aminopeptidase inhibitors amastatin and bestatin. Regulates central hypertension through its calcium-modulated preference to cleave N-terminal acidic residues from peptides such as angiotensin II. The polypeptide is Glutamyl aminopeptidase (ENPEP) (Homo sapiens (Human)).